Reading from the N-terminus, the 251-residue chain is Flap endonuclease Xni (251 aa).

A Mg(2+)-binding site is contributed by Asp-104. Positions 160-249 constitute a 5'-3' exonuclease domain; that stretch reads VQPQQLPDYW…IDGNLQQLRL (90 aa). K(+) is bound by residues Leu-171, Ala-172, Pro-180, Val-182, and Ile-185. Positions 184 to 189 are interaction with DNA; it reads GIGPKS.

The protein belongs to the Xni family. Mg(2+) serves as cofactor. Requires K(+) as cofactor.

In terms of biological role, has flap endonuclease activity. During DNA replication, flap endonucleases cleave the 5'-overhanging flap structure that is generated by displacement synthesis when DNA polymerase encounters the 5'-end of a downstream Okazaki fragment. In Escherichia coli O7:K1 (strain IAI39 / ExPEC), this protein is Flap endonuclease Xni.